The chain runs to 1887 residues: MSPQWMPQNIQKRLLLYVLQQLSLFSEIDLPNLEEVSLNNIVLKNVSIDPDKVGKLPGCNLRYGQVGSLELNGGVMGGVSIDANNVEIVIAPDFDMKEEISNNVQFSLAQSTADLANTLMVDKSSNEYESSDDETDTVMPSVSSKSRSNSSSSGTSARTRPSALSGVMTKAVEMALSRLQVKVTNLNIKIVSESTDLVLKVDEALLNTINGTRHVKIKGVKLITLKPEVNPGESSDDSPEQESPKESENSNTSDDDEDNDNDYGDESLMNSMVFTHDEASSIYMSATSQSFNKPSNNDDTAPTETAPDNKESPILLHIDDIDIEFEGLSNITNLEIDVGEIKVAAVPITPTIISIFNNISHNLKLKYYQQRKSNIHKQRFKSNLSFPQYADDNDEIEDENEQMPILDDNGASSGPFFDKLRIHNIIVSATSALLPTGQFASASNSLNFIFHNLNIKYKNEALIYGGIEVFKIVKITNDQEIEVLKFNNSTAPTNTEPNPSDEPAGSTSAPSNSSKADIRFEAFTKLDNEIKHLEFTSLFSKQAFVNLDKSVLLLLSNFGISVSSIYDSYNTMRSTMNSVNSFKANTNINGEPRDASSIGVAKESNLQIILQTASTTINIKLSDNLNLKAVIYPISFNLLKQGMSINKILISTVSSGIETLISTLSNIQLSTKSQEFKSFSNKSGYSKGSNDSFPRETILGSNLTLSLSKISSKASLKELKLLIGDFADFASSWQLLSLQVNSLKNSVKDKGFVMSSKSNKNESSSMLSNSMYFNQRRSRRSNFNNPSLVNTNRSNLVSFRLYVDHIEFCITNVLPKLGDFDFQLEKVSFYKLNNDIQGSIHTVKVDRNLGNGEAVNDFIYEFQRKRCNKINIPLILVNIKSNDKANTIDISLRNFLIEYYTRWLELLEKEIDENAVLHDITGQKRESSSLNSPSKRLDIRFSLYDCVIGLNPGRLDCKSLLIINKGNSDVTFGLHQFYIKSSLRNLSLLIIDDVKNINLSKTDREAASKPTSTAYISPLSWFTSIGYISVGNINCIHLGITVNTGIQEIIERNEKLGLQDNLALLDIKINSDEHQLDLCADSAHVLIQMINDLKPPLSFTDEEKIKVTVNDPINLLDEIGQNVFLNESIMKSASHSETFENSTISRKNSDANDINIVEEYYDGSHTSSQSLENGFNKLSISESDNAKDDASSFSFDEEHFSSNGADRNNTEVFPIKMNINLSKTKIYLYDGFDWKGTRKTIKGAVKRVEAQALQELERVKEHGSRKHLKRNMQVTFDEPESNATEDNYGNDQENDDGNSSDNQSLIGETLFQSIHLSVPKGSNPSSLTKNINKSVQNYFDNEDSNDSSINYNVETGRNYKNLKLRRSKNHKISIDLKNIEVNMAILTTRDPRRDKDVPDVKYEVTNSIDLRIEDIDIYDNIPNSTWNKFLSYMNSLGEREIGTSMLKASITNVRPNPELCSTEAMIDISILPIRLHVDQDALDFFIRFFDFKDKRFELPIDEIIYIQMFKMSSIKLKLDYKPKKIDYSGIRSGKVSEFVNFFILDGSELSLPKLTLYGILGMPMLGAELTKTWAPNIQQTQLSGLLAGLSPFRSIVNIGGGFKDLVAVPIKEYRKDGRLMRSLQKGTSKFAKTTGYELLNLGAKLASGTQVVLEQSEQVFGGEGSSARSPKNKNDKHGKIEDDDNEDIYTSGNTSKGNSNLLASSQLLNKTIAVDNDPYGKKKLYSYIELDESDDIDDKILENSLLLMNPKDIKESRQLQVVSEESELQELDEKEELDDEDAIKLVSLYSNQPENTQQGLKLAYKSLGENFEITKKAVNNLRKELNASSNVQESLKSMVKSSPILIIRPMIGTTEALSKALMGISNEIDSNHIIESKDKYRYDASEK.

Disordered stretches follow at residues 125–164, 227–267, 288–310, 487–513, 1188–1209, 1260–1304, and 1659–1696; these read SNEYESSDDETDTVMPSVSSKSRSNSSSSGTSARTRPSAL, PEVN…GDES, SQSFNKPSNNDDTAPTETAPDNK, NNSTAPTNTEPNPSDEPAGSTSAPSNS, DDASSFSFDEEHFSSNGADRNN, KEHG…DNQS, and VFGGEGSSARSPKNKNDKHGKIEDDDNEDIYTSGNTSK. Residues 141–162 are compositionally biased toward low complexity; it reads SVSSKSRSNSSSSGTSARTRPS. Positions 253-265 are enriched in acidic residues; the sequence is SDDDEDNDNDYGD. 2 stretches are compositionally biased toward polar residues: residues 288–303 and 487–498; these read SQSFNKPSNNDDTAPT and NNSTAPTNTEPN. Positions 1188 to 1200 are enriched in basic and acidic residues; sequence DDASSFSFDEEHF. Over residues 1281-1291 the composition is skewed to polar residues; sequence SNATEDNYGND.

Belongs to the ATG2 family.

The protein resides in the preautophagosomal structure membrane. The protein localises to the endoplasmic reticulum membrane. The catalysed reaction is a 1,2-diacyl-sn-glycero-3-phosphocholine(in) = a 1,2-diacyl-sn-glycero-3-phosphocholine(out). The enzyme catalyses a 1,2-diacyl-sn-glycero-3-phospho-L-serine(in) = a 1,2-diacyl-sn-glycero-3-phospho-L-serine(out). It catalyses the reaction a 1,2-diacyl-sn-glycero-3-phosphoethanolamine(in) = a 1,2-diacyl-sn-glycero-3-phosphoethanolamine(out). Functionally, lipid transfer protein required for autophagosome completion and peroxisome degradation. Tethers the edge of the isolation membrane (IM) to the endoplasmic reticulum (ER) and mediates direct lipid transfer from ER to IM for IM expansion. ATG2 binds to the ER exit site (ERES), which is the membrane source for autophagosome formation, using basic residues in its N-terminal region (NR) and to the expanding edge of the IM through its C-terminal region. The latter binding is assisted by an ATG18-PtdIns3P interaction. ATG2 then extracts phospholipids from the membrane source using its NR and transfers them to ATG9 to the IM through its predicted beta-sheet-rich structure for membrane expansion. This Debaryomyces hansenii (strain ATCC 36239 / CBS 767 / BCRC 21394 / JCM 1990 / NBRC 0083 / IGC 2968) (Yeast) protein is Autophagy-related protein 2 (ATG2).